Reading from the N-terminus, the 38-residue chain is Alpha-amylase (38 aa).

This sequence belongs to the glycosyl hydrolase 13 family. In terms of assembly, monomer. Requires Ca(2+) as cofactor. Chloride serves as cofactor. In terms of tissue distribution, expressed by the venom gland.

It is found in the secreted. It catalyses the reaction Endohydrolysis of (1-&gt;4)-alpha-D-glucosidic linkages in polysaccharides containing three or more (1-&gt;4)-alpha-linked D-glucose units.. The protein is Alpha-amylase of Tityus serrulatus (Brazilian scorpion).